The following is a 350-amino-acid chain: Biotin synthase (350 aa).

Residues 54–278 form the Radical SAM core domain; that stretch reads REIQLSTLLS…TMPQSYVRLS (225 aa). Residues C69, C73, and C76 each contribute to the [4Fe-4S] cluster site. [2Fe-2S] cluster-binding residues include C113, C144, C204, and R276.

The protein belongs to the radical SAM superfamily. Biotin synthase family. In terms of assembly, homodimer. Requires [4Fe-4S] cluster as cofactor. The cofactor is [2Fe-2S] cluster.

It carries out the reaction (4R,5S)-dethiobiotin + (sulfur carrier)-SH + 2 reduced [2Fe-2S]-[ferredoxin] + 2 S-adenosyl-L-methionine = (sulfur carrier)-H + biotin + 2 5'-deoxyadenosine + 2 L-methionine + 2 oxidized [2Fe-2S]-[ferredoxin]. The protein operates within cofactor biosynthesis; biotin biosynthesis; biotin from 7,8-diaminononanoate: step 2/2. Functionally, catalyzes the conversion of dethiobiotin (DTB) to biotin by the insertion of a sulfur atom into dethiobiotin via a radical-based mechanism. This is Biotin synthase from Neisseria gonorrhoeae (strain ATCC 700825 / FA 1090).